A 770-amino-acid chain; its full sequence is Probable capsid and replication-associated protein (770 aa).

Disordered regions lie at residues 645–682 (QRMQ…QKES) and 697–717 (WEDS…TQTV). Over residues 646–656 (RMQQQPTTTDI) the composition is skewed to polar residues. The segment covering 666 to 681 (RDTEVYHSSQEGEQKE) has biased composition (basic and acidic residues). The segment covering 703 to 717 (EESGSQSSEEETQTV) has biased composition (low complexity).

It belongs to the anelloviridae capsid protein family.

It localises to the virion. In terms of biological role, may self assemble to form an icosahedral capsid. Presumably essential to initiate and monitor viral genome replication by a rolling circle mechanism. The polypeptide is Probable capsid and replication-associated protein (Homo sapiens (Human)).